Consider the following 865-residue polypeptide: Alanine--tRNA ligase (865 aa).

Zn(2+) contacts are provided by His554, His558, Cys656, and His660.

The protein belongs to the class-II aminoacyl-tRNA synthetase family. Requires Zn(2+) as cofactor.

It localises to the cytoplasm. It catalyses the reaction tRNA(Ala) + L-alanine + ATP = L-alanyl-tRNA(Ala) + AMP + diphosphate. In terms of biological role, catalyzes the attachment of alanine to tRNA(Ala) in a two-step reaction: alanine is first activated by ATP to form Ala-AMP and then transferred to the acceptor end of tRNA(Ala). Also edits incorrectly charged Ser-tRNA(Ala) and Gly-tRNA(Ala) via its editing domain. This chain is Alanine--tRNA ligase, found in Francisella tularensis subsp. tularensis (strain WY96-3418).